Consider the following 476-residue polypeptide: Aspartyl/glutamyl-tRNA(Asn/Gln) amidotransferase subunit B (476 aa).

Belongs to the GatB/GatE family. GatB subfamily. In terms of assembly, heterotrimer of A, B and C subunits.

The enzyme catalyses L-glutamyl-tRNA(Gln) + L-glutamine + ATP + H2O = L-glutaminyl-tRNA(Gln) + L-glutamate + ADP + phosphate + H(+). It carries out the reaction L-aspartyl-tRNA(Asn) + L-glutamine + ATP + H2O = L-asparaginyl-tRNA(Asn) + L-glutamate + ADP + phosphate + 2 H(+). Functionally, allows the formation of correctly charged Asn-tRNA(Asn) or Gln-tRNA(Gln) through the transamidation of misacylated Asp-tRNA(Asn) or Glu-tRNA(Gln) in organisms which lack either or both of asparaginyl-tRNA or glutaminyl-tRNA synthetases. The reaction takes place in the presence of glutamine and ATP through an activated phospho-Asp-tRNA(Asn) or phospho-Glu-tRNA(Gln). In Laribacter hongkongensis (strain HLHK9), this protein is Aspartyl/glutamyl-tRNA(Asn/Gln) amidotransferase subunit B.